A 240-amino-acid chain; its full sequence is Phosphatidylserine decarboxylase proenzyme (240 aa).

The active-site Schiff-base intermediate with substrate; via pyruvic acid is S209. S209 is subject to Pyruvic acid (Ser); by autocatalysis.

This sequence belongs to the phosphatidylserine decarboxylase family. PSD-A subfamily. Heterodimer of a large membrane-associated beta subunit and a small pyruvoyl-containing alpha subunit. It depends on pyruvate as a cofactor. Is synthesized initially as an inactive proenzyme. Formation of the active enzyme involves a self-maturation process in which the active site pyruvoyl group is generated from an internal serine residue via an autocatalytic post-translational modification. Two non-identical subunits are generated from the proenzyme in this reaction, and the pyruvate is formed at the N-terminus of the alpha chain, which is derived from the carboxyl end of the proenzyme. The post-translation cleavage follows an unusual pathway, termed non-hydrolytic serinolysis, in which the side chain hydroxyl group of the serine supplies its oxygen atom to form the C-terminus of the beta chain, while the remainder of the serine residue undergoes an oxidative deamination to produce ammonia and the pyruvoyl prosthetic group on the alpha chain.

The protein resides in the cell membrane. It carries out the reaction a 1,2-diacyl-sn-glycero-3-phospho-L-serine + H(+) = a 1,2-diacyl-sn-glycero-3-phosphoethanolamine + CO2. It participates in phospholipid metabolism; phosphatidylethanolamine biosynthesis; phosphatidylethanolamine from CDP-diacylglycerol: step 2/2. In terms of biological role, catalyzes the formation of phosphatidylethanolamine (PtdEtn) from phosphatidylserine (PtdSer). This chain is Phosphatidylserine decarboxylase proenzyme, found in Mycobacterium marinum (strain ATCC BAA-535 / M).